The following is a 520-amino-acid chain: GMP synthase [glutamine-hydrolyzing] (520 aa).

The 194-residue stretch at 12-205 folds into the Glutamine amidotransferase type-1 domain; it reads KIIVLDYGSQ…AISICGARGD (194 aa). Cys89 acts as the Nucleophile in catalysis. Active-site residues include His179 and Glu181. The 190-residue stretch at 206–395 folds into the GMPS ATP-PPase domain; sequence WSMDNFIDME…LGMPEEIVWR (190 aa). Position 233-239 (233-239) interacts with ATP; it reads SGGVDSS.

In terms of assembly, homodimer.

The catalysed reaction is XMP + L-glutamine + ATP + H2O = GMP + L-glutamate + AMP + diphosphate + 2 H(+). The protein operates within purine metabolism; GMP biosynthesis; GMP from XMP (L-Gln route): step 1/1. Functionally, catalyzes the synthesis of GMP from XMP. The protein is GMP synthase [glutamine-hydrolyzing] of Streptococcus pyogenes serotype M1.